The sequence spans 634 residues: 1-deoxy-D-xylulose-5-phosphate synthase (634 aa).

Thiamine diphosphate contacts are provided by residues His77 and 118–120 (GHA). A Mg(2+)-binding site is contributed by Asp149. Residues 150–151 (AS), Asn178, Tyr289, and Glu371 contribute to the thiamine diphosphate site. Mg(2+) is bound at residue Asn178.

Belongs to the transketolase family. DXPS subfamily. In terms of assembly, homodimer. The cofactor is Mg(2+). Requires thiamine diphosphate as cofactor.

It carries out the reaction D-glyceraldehyde 3-phosphate + pyruvate + H(+) = 1-deoxy-D-xylulose 5-phosphate + CO2. Its pathway is metabolic intermediate biosynthesis; 1-deoxy-D-xylulose 5-phosphate biosynthesis; 1-deoxy-D-xylulose 5-phosphate from D-glyceraldehyde 3-phosphate and pyruvate: step 1/1. In terms of biological role, catalyzes the acyloin condensation reaction between C atoms 2 and 3 of pyruvate and glyceraldehyde 3-phosphate to yield 1-deoxy-D-xylulose-5-phosphate (DXP). The sequence is that of 1-deoxy-D-xylulose-5-phosphate synthase from Leptospira interrogans serogroup Icterohaemorrhagiae serovar copenhageni (strain Fiocruz L1-130).